Here is a 72-residue protein sequence, read N- to C-terminus: MKASKIREMTTQELHNELKKLKRELFNLRFQLATNQLENPMRIREVKRTIARIKTIMRERELEQERANKNVK.

Belongs to the universal ribosomal protein uL29 family.

In Caldicellulosiruptor bescii (strain ATCC BAA-1888 / DSM 6725 / KCTC 15123 / Z-1320) (Anaerocellum thermophilum), this protein is Large ribosomal subunit protein uL29.